The following is a 149-amino-acid chain: uncharacterized protein (149 aa).

This sequence to B.subtilis XkdN.

This is an uncharacterized protein from Bacillus subtilis (strain 168).